A 200-amino-acid chain; its full sequence is dITP/XTP pyrophosphatase (200 aa).

8 to 13 lines the substrate pocket; that stretch reads TRNAGK. The active-site Proton acceptor is the aspartate 72. Aspartate 72 contacts Mg(2+). Residues serine 73, 155-158, lysine 178, and 183-184 each bind substrate; these read FGYD and HR.

Belongs to the HAM1 NTPase family. In terms of assembly, homodimer. It depends on Mg(2+) as a cofactor.

The catalysed reaction is XTP + H2O = XMP + diphosphate + H(+). It catalyses the reaction dITP + H2O = dIMP + diphosphate + H(+). The enzyme catalyses ITP + H2O = IMP + diphosphate + H(+). In terms of biological role, pyrophosphatase that catalyzes the hydrolysis of nucleoside triphosphates to their monophosphate derivatives, with a high preference for the non-canonical purine nucleotides XTP (xanthosine triphosphate), dITP (deoxyinosine triphosphate) and ITP. Seems to function as a house-cleaning enzyme that removes non-canonical purine nucleotides from the nucleotide pool, thus preventing their incorporation into DNA/RNA and avoiding chromosomal lesions. In Streptomyces coelicolor (strain ATCC BAA-471 / A3(2) / M145), this protein is dITP/XTP pyrophosphatase.